The primary structure comprises 185 residues: UPF0200 protein Mevan_0592 (185 aa).

An ATP-binding site is contributed by 8-15 (GMPGSGKS).

It belongs to the UPF0200 family.

The polypeptide is UPF0200 protein Mevan_0592 (Methanococcus vannielii (strain ATCC 35089 / DSM 1224 / JCM 13029 / OCM 148 / SB)).